Consider the following 124-residue polypeptide: MTKTKQEIYNKRPTSPHLSIYKLQISSTLSILHRMTGVALFFAVSILAWWLILSKYDNNYLQFANCCIIKICLVAVSYAWFYHLCNGIRHLFWDIGYGFSIKAVNITGWCVVVCSILLTMLLWV.

Over 1–29 the chain is Cytoplasmic; that stretch reads MTKTKQEIYNKRPTSPHLSIYKLQISSTL. The helical transmembrane segment at 30 to 55 threads the bilayer; sequence SILHRMTGVALFFAVSILAWWLILSK. The Periplasmic portion of the chain corresponds to 56-67; it reads YDNNYLQFANCC. The chain crosses the membrane as a helical span at residues 68–88; that stretch reads IIKICLVAVSYAWFYHLCNGI. Heme is bound at residue H83. Residues 89 to 103 lie on the Cytoplasmic side of the membrane; the sequence is RHLFWDIGYGFSIKA. The chain crosses the membrane as a helical span at residues 104–124; sequence VNITGWCVVVCSILLTMLLWV.

This sequence belongs to the cytochrome b560 family. Part of an enzyme complex containing four subunits: a flavoprotein, an iron-sulfur protein, plus two membrane-anchoring proteins, SdhC and SdhD. The complex can form homotrimers. Requires heme as cofactor.

It localises to the cell inner membrane. It participates in carbohydrate metabolism; tricarboxylic acid cycle. Membrane-anchoring subunit of succinate dehydrogenase (SDH). This Rickettsia felis (strain ATCC VR-1525 / URRWXCal2) (Rickettsia azadi) protein is Succinate dehydrogenase cytochrome b556 subunit (sdhC).